A 99-amino-acid chain; its full sequence is DNA-directed RNA polymerase subunit Rpo11 (99 aa).

This sequence belongs to the archaeal Rpo11/eukaryotic RPB11/RPC19 RNA polymerase subunit family. Part of the RNA polymerase complex.

It is found in the cytoplasm. The enzyme catalyses RNA(n) + a ribonucleoside 5'-triphosphate = RNA(n+1) + diphosphate. Its function is as follows. DNA-dependent RNA polymerase (RNAP) catalyzes the transcription of DNA into RNA using the four ribonucleoside triphosphates as substrates. This chain is DNA-directed RNA polymerase subunit Rpo11, found in Aeropyrum pernix (strain ATCC 700893 / DSM 11879 / JCM 9820 / NBRC 100138 / K1).